The following is a 1024-amino-acid chain: Protein sumv-1 (1024 aa).

Disordered regions lie at residues 447–486, 501–564, 577–617, 645–664, 710–739, and 773–1024; these read DASQ…KKMP, NFQG…RRGV, PSRH…RSQA, SQMA…GSPQ, VRSG…DTVQ, and AGNS…EEEL. 3 stretches are compositionally biased toward polar residues: residues 467–486, 501–514, and 528–542; these read SFGT…KKMP, NFQG…SSAT, and RSQQ…QTQD. Residues 584–600 show a composition bias toward low complexity; sequence SPLTPSTSTSSSQLLAP. A compositionally biased stretch (polar residues) spans 605–617; that stretch reads QPGTSSQTFRSQA. Low complexity-rich tracts occupy residues 710–730 and 784–809; these read VRSG…ASGS and AGAP…ASTS. Residues 810-832 show a composition bias toward polar residues; sequence VPEPTKSSESSVDPQSDVSFSNP. Residues 859–870 show a composition bias toward low complexity; that stretch reads TLASESTSSEAT. A compositionally biased stretch (polar residues) spans 873-883; the sequence is HDTTSSSSAET. Residues 903-914 show a composition bias toward basic and acidic residues; the sequence is PEKEKEKIDRPK. Composition is skewed to low complexity over residues 916-943, 952-962, and 970-986; these read PKSS…NQAI, SASTSSSAAST, and LLAE…QQQA. Polar residues predominate over residues 987 to 998; the sequence is IGSTSKNGGSTK.

It is found in the nucleus. It localises to the cytoplasm. The protein localises to the cell projection. Its subcellular location is the axon. Functionally, nuclear factor that influences the activity of genes involved in vulval development. The protein is Protein sumv-1 of Caenorhabditis elegans.